We begin with the raw amino-acid sequence, 215 residues long: Leucyl/phenylalanyl-tRNA--protein transferase (215 aa).

The protein belongs to the L/F-transferase family.

It localises to the cytoplasm. The catalysed reaction is N-terminal L-lysyl-[protein] + L-leucyl-tRNA(Leu) = N-terminal L-leucyl-L-lysyl-[protein] + tRNA(Leu) + H(+). The enzyme catalyses N-terminal L-arginyl-[protein] + L-leucyl-tRNA(Leu) = N-terminal L-leucyl-L-arginyl-[protein] + tRNA(Leu) + H(+). It carries out the reaction L-phenylalanyl-tRNA(Phe) + an N-terminal L-alpha-aminoacyl-[protein] = an N-terminal L-phenylalanyl-L-alpha-aminoacyl-[protein] + tRNA(Phe). Its function is as follows. Functions in the N-end rule pathway of protein degradation where it conjugates Leu, Phe and, less efficiently, Met from aminoacyl-tRNAs to the N-termini of proteins containing an N-terminal arginine or lysine. This is Leucyl/phenylalanyl-tRNA--protein transferase from Campylobacter jejuni subsp. doylei (strain ATCC BAA-1458 / RM4099 / 269.97).